A 264-amino-acid polypeptide reads, in one-letter code: MRVVRPEFRPAPGLDTDAMASRQRDIAAVADFADDHGLTPERIGLDEPPGEQAALGGATTSGEAAPVVVGVDQAFRDDEVSVSAAVAIRDGAVIERAAGNAPLDVPYVPGLLAFREGSAVIDALSSLSVEPDLLVVDGSGRIHYRQAGLATHVGVLFDVPAVGVAKSLLCGTPAAALADPLPAGTRVAIEADDSMDAPDGAVVGYALQSRQYPTPETRHINPLYVSPGHRVSAGTAADLVEATCTQYKLPAPTRLADQYAADLT.

Mg(2+)-binding residues include D72 and D137.

Belongs to the endonuclease V family. The cofactor is Mg(2+).

The protein localises to the cytoplasm. It catalyses the reaction Endonucleolytic cleavage at apurinic or apyrimidinic sites to products with a 5'-phosphate.. Functionally, DNA repair enzyme involved in the repair of deaminated bases. Selectively cleaves double-stranded DNA at the second phosphodiester bond 3' to a deoxyinosine leaving behind the intact lesion on the nicked DNA. The sequence is that of Endonuclease V from Halobacterium salinarum (strain ATCC 700922 / JCM 11081 / NRC-1) (Halobacterium halobium).